We begin with the raw amino-acid sequence, 263 residues long: Probable esterase PIR7A (263 aa).

S82 functions as the Acyl-ester intermediate in the catalytic mechanism. Residues D213 and H241 each act as charge relay system in the active site.

This sequence belongs to the AB hydrolase superfamily.

In Oryza sativa subsp. indica (Rice), this protein is Probable esterase PIR7A (PIR7A).